We begin with the raw amino-acid sequence, 290 residues long: 33 kDa chaperonin (290 aa).

Disulfide bonds link C235–C237 and C268–C271.

It belongs to the HSP33 family. Post-translationally, under oxidizing conditions two disulfide bonds are formed involving the reactive cysteines. Under reducing conditions zinc is bound to the reactive cysteines and the protein is inactive.

It localises to the cytoplasm. Its function is as follows. Redox regulated molecular chaperone. Protects both thermally unfolding and oxidatively damaged proteins from irreversible aggregation. Plays an important role in the bacterial defense system toward oxidative stress. The protein is 33 kDa chaperonin of Streptococcus pyogenes serotype M6 (strain ATCC BAA-946 / MGAS10394).